A 45-amino-acid polypeptide reads, in one-letter code: Large ribosomal subunit protein bL34 (45 aa).

This sequence belongs to the bacterial ribosomal protein bL34 family.

The chain is Large ribosomal subunit protein bL34 from Kocuria rhizophila (strain ATCC 9341 / DSM 348 / NBRC 103217 / DC2201).